Here is a 951-residue protein sequence, read N- to C-terminus: Leucine-rich repeat-containing G-protein coupled receptor 4 (951 aa).

The N-terminal stretch at 1–24 (MPGPLRLLCFFALGLLGSAGPSGA) is a signal peptide. Residues 25–57 (APPLCAAPCSCDGDRRVDCSGKGLTAVPEGLSA) enclose the LRRNT domain. The Extracellular segment spans residues 25–544 (APPLCAAPCS…LLGSWMIRLT (520 aa)). Cystine bridges form between cysteine 29–cysteine 35 and cysteine 33–cysteine 43. 10 LRR repeats span residues 58–79 (FTQA…AFKS), 82–103 (FLEE…ALSG), 106–127 (ELKV…AIHG), 130–151 (ALQS…SFEG), 154–177 (QLRH…SNLP), 178–199 (TLQA…AFTN), 202–223 (SLVV…CFDG), 226–247 (NLET…IKAL), 249–270 (SLKE…AFGG), and 273–294 (LLRT…AFHN). Asparagine 68 is a glycosylation site (N-linked (GlcNAc...) asparagine). Asparagine 188 and asparagine 199 each carry an N-linked (GlcNAc...) asparagine glycan. Residues asparagine 294 and asparagine 314 are each glycosylated (N-linked (GlcNAc...) asparagine). LRR repeat units follow at residues 320 to 341 (HLES…LCQN), 344 to 365 (MLRT…NGCR), 366 to 387 (ALEE…TFQG), 390 to 411 (SLRI…AFAK), and 414 to 435 (TITN…GLNG). Residues cysteine 339 and cysteine 364 are joined by a disulfide bond. 2 disulfide bridges follow: cysteine 470–cysteine 522 and cysteine 471–cysteine 476. A glycan (N-linked (GlcNAc...) asparagine) is linked at asparagine 505. The chain crosses the membrane as a helical span at residues 545-565 (VWFIFLVALLFNLLVILTVFA). The Cytoplasmic portion of the chain corresponds to 566–575 (SCSSLPASKL). The helical transmembrane segment at 576 to 596 (FIGLISVSNLLMGIYTGILTF) threads the bilayer. The Extracellular portion of the chain corresponds to 597-619 (LDAVSWGRFAEFGIWWETGSGCK). Cysteine 618 and cysteine 693 form a disulfide bridge. Residues 620-640 (VAGSLAVFSSESAVFLLTLAA) traverse the membrane as a helical segment. The Cytoplasmic segment spans residues 641–661 (VERSVFAKDLMKHGKSSHLRQ). Residues 662–682 (FQVAALLALLGAAVAGCFPLF) traverse the membrane as a helical segment. The Extracellular segment spans residues 683 to 703 (HGGQYSASPLCLPFPTGETPS). Residues 704-724 (LGFTVTLVLLNSLAFLLMAII) traverse the membrane as a helical segment. The Cytoplasmic segment spans residues 725–756 (YTKLYCNLEKEDLSENSQSSVIKHVAWLIFTN). A helical transmembrane segment spans residues 757–777 (CIFFCPVAFFSFAPLITAISI). Topologically, residues 778–783 (SPEIMK) are extracellular. The helical transmembrane segment at 784–804 (SVTLIFFPLPACLNPVLYVFF) threads the bilayer. Residues 805–951 (NPKFKEDWKL…YAYNLQRVRD (147 aa)) are Cytoplasmic-facing. Phosphoserine is present on serine 920.

The protein belongs to the G-protein coupled receptor 1 family.

The protein localises to the cell membrane. Functionally, receptor for R-spondins that potentiates the canonical Wnt signaling pathway and is involved in the formation of various organs. Upon binding to R-spondins (RSPO1, RSPO2, RSPO3 or RSPO4), associates with phosphorylated LRP6 and frizzled receptors that are activated by extracellular Wnt receptors, triggering the canonical Wnt signaling pathway to increase expression of target genes. In contrast to classical G-protein coupled receptors, does not activate heterotrimeric G-proteins to transduce the signal. Its function as activator of the Wnt signaling pathway is required for the development of various organs, including liver, kidney, intestine, bone, reproductive tract and eye. May also act as a receptor for norrin (NDP), such results however require additional confirmation in vivo. Required during spermatogenesis to activate the Wnt signaling pathway in peritubular myoid cells. Required for the maintenance of intestinal stem cells and Paneth cell differentiation in postnatal intestinal crypts. Acts as a regulator of bone formation and remodeling. Involved in kidney development; required for maintaining the ureteric bud in an undifferentiated state. Involved in the development of the anterior segment of the eye. Required during erythropoiesis. Also acts as a negative regulator of innate immunity by inhibiting TLR2/TLR4 associated pattern-recognition and pro-inflammatory cytokine production. Plays an important role in regulating the circadian rhythms of plasma lipids, partially through regulating the rhythmic expression of MTTP. Required for proper development of GnRH neurons (gonadotropin-releasing hormone expressing neurons) that control the release of reproductive hormones from the pituitary gland. This chain is Leucine-rich repeat-containing G-protein coupled receptor 4 (Lgr4), found in Rattus norvegicus (Rat).